The chain runs to 1960 residues: Myosin-9 (1960 aa).

Position 2 is an N-acetylalanine (A2). The interval 2–838 (AQQAADKYLY…RLFTKVKPLL (837 aa)) is mediates interaction with LIMCH1. N6-acetyllysine is present on K8. Y11 is subject to Phosphotyrosine. Residues 27-77 (AAKKLVWVPSDKSGFEPASLKEEVGEEAIVELVENGKKVKVNKDDIQKMNP) enclose the Myosin N-terminal SH3-like domain. The region spanning 81-776 (SKVEDMAELT…VLAHLEEERD (696 aa)) is the Myosin motor domain. K102 carries the N6-acetyllysine modification. 174 to 181 (GESGAGKT) contributes to the ATP binding site. 3 positions are modified to N6-acetyllysine: K299, K435, and K613. Phosphoserine is present on S628. The segment at 654-676 (LAKLMATLRNTNPNFVRCIIPNH) is actin-binding. Y754 is subject to Phosphotyrosine. Residues 779–808 (ITDVIIGFQACCRGYLARKAFAKRQQQLTA) enclose the IQ domain. The stretch at 837 to 1926 (LLQVSRQEEE…LKNKLRRGDL (1090 aa)) forms a coiled coil. K850 is subject to N6-succinyllysine. 3 positions are modified to N6-acetyllysine: K860, K975, and K1024. A compositionally biased stretch (basic and acidic residues) spans 1035–1055 (RLRREEKQRQELEKTRRKLEG). Positions 1035 to 1057 (RLRREEKQRQELEKTRRKLEGDS) are disordered. S1114 is modified (phosphoserine). Residues 1118 to 1137 (EDLESERASRNKAEKQKRDL) are disordered. The segment covering 1122 to 1137 (SERASRNKAEKQKRDL) has biased composition (basic and acidic residues). Residues K1234, K1249, K1357, K1392, K1404, K1410, K1459, and K1638 each carry the N6-acetyllysine modification. At K1669 the chain carries N6-succinyllysine. S1714 is subject to Phosphoserine. K1793, K1802, and K1845 each carry N6-acetyllysine. Positions 1877–1960 (RQLEEAEEEA…ADGAEAKPAE (84 aa)) are disordered. R1923 bears the Omega-N-methylarginine mark. S1943 carries the post-translational modification Phosphoserine. Over residues 1948–1960 (DGKADGAEAKPAE) the composition is skewed to basic and acidic residues.

It belongs to the TRAFAC class myosin-kinesin ATPase superfamily. Myosin family. Myosin is a hexameric protein that consists of 2 heavy chain subunits (MHC), 2 alkali light chain subunits (MLC) and 2 regulatory light chain subunits (MLC-2). Interacts with RASIP1. Interacts with DDR1. Interacts with PDLIM2. Interacts with SVIL. Interacts with HTRA3. Interacts with Myo7a. Interacts with CFAP95. Interacts with LIMCH1; independently of the integration of MYH9 into the myosin complex. Interacts with RAB3A. Interacts with ZBED4. Interacts with S100A4; this interaction increases cell motility. In terms of assembly, (Microbial infection) Interacts with herpes simplex virus 1/HHV-1 envelope glycoprotein B. ISGylated. In terms of processing, ubiquitination. As to expression, in the kidney, expressed in the glomeruli. Also expressed in leukocytes.

The protein localises to the cytoplasm. It localises to the cytoskeleton. It is found in the cell cortex. The protein resides in the cytoplasmic vesicle. Its subcellular location is the secretory vesicle. The protein localises to the cortical granule. It localises to the cell membrane. Functionally, cellular myosin that appears to play a role in cytokinesis, cell shape, and specialized functions such as secretion and capping. Required for cortical actin clearance prior to oocyte exocytosis. Promotes cell motility in conjunction with S100A4. During cell spreading, plays an important role in cytoskeleton reorganization, focal contact formation (in the margins but not the central part of spreading cells), and lamellipodial retraction; this function is mechanically antagonized by MYH10. Its function is as follows. (Microbial infection) Acts as a receptor for herpes simplex virus 1/HHV-1 envelope glycoprotein B. This Homo sapiens (Human) protein is Myosin-9 (MYH9).